Consider the following 146-residue polypeptide: Anti-sigma F factor (146 aa).

Belongs to the anti-sigma-factor family.

The enzyme catalyses L-seryl-[protein] + ATP = O-phospho-L-seryl-[protein] + ADP + H(+). It carries out the reaction L-threonyl-[protein] + ATP = O-phospho-L-threonyl-[protein] + ADP + H(+). In terms of biological role, binds to sigma F and blocks its ability to form an RNA polymerase holoenzyme (E-sigma F). Phosphorylates SpoIIAA on a serine residue. This phosphorylation may enable SpoIIAA to act as an anti-anti-sigma factor that counteracts SpoIIAB and thus releases sigma F from inhibition. The chain is Anti-sigma F factor from Geobacillus thermodenitrificans (strain NG80-2).